A 454-amino-acid chain; its full sequence is Chaperone SurA (454 aa).

Residues 1 to 28 form the signal peptide; the sequence is MKISSFRKGRWLGALALFAVVCWSMADA. PpiC domains follow at residues 177–278 and 287–386; these read DREY…KMLA and LTKT…QVLE. Residues 431 to 454 form a disordered region; that stretch reads LDETPASPGEDAPAGEDSPETFMR. Over residues 443-454 the composition is skewed to acidic residues; it reads PAGEDSPETFMR.

The protein localises to the periplasm. The enzyme catalyses [protein]-peptidylproline (omega=180) = [protein]-peptidylproline (omega=0). Chaperone involved in the correct folding and assembly of outer membrane proteins. Recognizes specific patterns of aromatic residues and the orientation of their side chains, which are found more frequently in integral outer membrane proteins. May act in both early periplasmic and late outer membrane-associated steps of protein maturation. The polypeptide is Chaperone SurA (Methylococcus capsulatus (strain ATCC 33009 / NCIMB 11132 / Bath)).